The following is a 100-amino-acid chain: Aspartyl/glutamyl-tRNA(Asn/Gln) amidotransferase subunit C (100 aa).

It belongs to the GatC family. In terms of assembly, heterotrimer of A, B and C subunits.

The catalysed reaction is L-glutamyl-tRNA(Gln) + L-glutamine + ATP + H2O = L-glutaminyl-tRNA(Gln) + L-glutamate + ADP + phosphate + H(+). It catalyses the reaction L-aspartyl-tRNA(Asn) + L-glutamine + ATP + H2O = L-asparaginyl-tRNA(Asn) + L-glutamate + ADP + phosphate + 2 H(+). In terms of biological role, allows the formation of correctly charged Asn-tRNA(Asn) or Gln-tRNA(Gln) through the transamidation of misacylated Asp-tRNA(Asn) or Glu-tRNA(Gln) in organisms which lack either or both of asparaginyl-tRNA or glutaminyl-tRNA synthetases. The reaction takes place in the presence of glutamine and ATP through an activated phospho-Asp-tRNA(Asn) or phospho-Glu-tRNA(Gln). The sequence is that of Aspartyl/glutamyl-tRNA(Asn/Gln) amidotransferase subunit C from Rickettsia africae (strain ESF-5).